Consider the following 320-residue polypeptide: Stress-involved WYL domain-containing regulator (320 aa).

Positions 7–65 (TTGRVVQLLGLLQSRRVWTGEELAERLGVTGRSVRRDIERLRELGYPVHASKGQGGGYQ) constitute an HTH deoR-type domain. Positions 24–43 (WTGEELAERLGVTGRSVRRD) form a DNA-binding region, H-T-H motif. The WYL domain maps to 139 to 218 (DTAVAPDVLM…SDVRATGTTF (80 aa)). The segment at 245–320 (VRYFAPEKVV…MADRLRRAVR (76 aa)) is WCX domain.

In terms of assembly, homodimer.

In terms of biological role, transcriptional activator. Acts as a transcriptional activator of the MSMEG_1357-56 operon upon genotoxic stress. Controls adjacent genes that belong to the DinB/YfiT-like putative metalloenzymes superfamily by upregulating their expression in response to various genotoxic stress conditions, including exposure to H(2)O(2) or the natural antibiotic zeocin, as well as mitomycin C (MMC), diamide and UVC radiation. Upon genotoxic stress, upregulates two genes encoding proteins of the DinB/YfiT-like putative metalloenzymes superfamily, MSMEG_1357 and MSMEG_1356. Binds different forms of single-stranded DNA (ssDNA) with high affinity, primarily through its characteristic WYL domain. Binds nucleic acids with single-stranded regions, such as polyT 20mer ssDNA, 5' tailed, 3' tailed and fork DNA, but not ssRNA. The chain is Stress-involved WYL domain-containing regulator from Mycolicibacterium smegmatis (strain ATCC 700084 / mc(2)155) (Mycobacterium smegmatis).